We begin with the raw amino-acid sequence, 441 residues long: Protein translocase subunit SecY (441 aa).

The next 10 helical transmembrane spans lie at Leu24 to Ile44, Ile77 to Thr97, Ala123 to Leu143, Phe152 to Leu172, Ile181 to Ile201, Pro215 to Val235, Val272 to Phe292, Pro313 to Met333, Leu373 to Trp393, and Phe397 to Gln417.

Belongs to the SecY/SEC61-alpha family. In terms of assembly, component of the Sec protein translocase complex. Heterotrimer consisting of SecY, SecE and SecG subunits. The heterotrimers can form oligomers, although 1 heterotrimer is thought to be able to translocate proteins. Interacts with the ribosome. Interacts with SecDF, and other proteins may be involved. Interacts with SecA.

The protein resides in the cell inner membrane. The central subunit of the protein translocation channel SecYEG. Consists of two halves formed by TMs 1-5 and 6-10. These two domains form a lateral gate at the front which open onto the bilayer between TMs 2 and 7, and are clamped together by SecE at the back. The channel is closed by both a pore ring composed of hydrophobic SecY resides and a short helix (helix 2A) on the extracellular side of the membrane which forms a plug. The plug probably moves laterally to allow the channel to open. The ring and the pore may move independently. In Haemophilus influenzae (strain ATCC 51907 / DSM 11121 / KW20 / Rd), this protein is Protein translocase subunit SecY.